Here is a 1076-residue protein sequence, read N- to C-terminus: Nuclear factor of activated T-cells, cytoplasmic 3 (1076 aa).

Thr2 is subject to N-acetylthreonine. Residues 110 to 115 are calcineurin-binding; that stretch reads PSIQIT. Residues 206–307 form a disordered region; sequence LGSPLTSPGG…PGHSPRGSVT (102 aa). 2 repeat units span residues 208-224 and 237-253. The 3 X SP repeats stretch occupies residues 208–309; the sequence is SPLTSPGGSP…HSPRGSVTED (102 aa). The span at 237–254 shows a compositional bias: polar residues; sequence SPRQSPCHSPRSSITDEN. The span at 257–271 shows a compositional bias: low complexity; sequence SPRPASGPSSRPTSP. Residues 274–276 carry the Nuclear localization signal motif; it reads KRR. The stretch at 293-309 is repeat 3; that stretch reads SPVPSPGHSPRGSVTED. Ser345 carries the phosphoserine modification. Residues 359 to 390 are disordered; that stretch reads CSDDQGSLSPSRETSVDDGLGSQYPLKKDSSG. The span at 362–371 shows a compositional bias: polar residues; the sequence is DQGSLSPSRE. Ser373 carries the post-translational modification Phosphoserine. In terms of domain architecture, RHD spans 416-597; sequence SSLPPLDWPL…IPVECSQRSA (182 aa). The DNA-binding element occupies 445–452; it reads RAHYETEG. A Nuclear localization signal motif is present at residues 687 to 689; it reads KRK. Disordered regions lie at residues 700–744 and 863–987; these read PVLM…ALSA and GHLL…GGLS. Low complexity predominate over residues 713–722; it reads LSSVPSLPVP. 2 stretches are compositionally biased toward polar residues: residues 724–734 and 888–911; these read SAQTQRPSSDT and SAGQRSLSSPVAAQVTGQPSSHLQ. 2 stretches are compositionally biased toward low complexity: residues 917–939 and 946–965; these read PSHPGSATAASPAASHALSSSPI and QLQSMPYQSPSSGTASSPSP. A compositionally biased stretch (polar residues) spans 970-981; sequence HSGQHSTQAQST. The short motif at 1032 to 1041 is the Nuclear export signal element; sequence TLDDVNEIIG. The segment at 1049–1076 is disordered; it reads VSQGPEVIRDAPLPGPESPDVMSSNSAQ. Ser1066 bears the Phosphoserine mark.

NFATC proteins bind to DNA as monomers. Member of the multicomponent NFATC transcription complex that consists of at least two components, a pre-existing cytoplasmic component NFATC2 and an inducible nuclear component NFATC1. Other members such as NFATC4, or members of the activating protein-1 family, MAF, GATA4 and Cbp/p300 can also bind the complex. Component of a promoter-binding complex composed of STAT3, NFATC3 and NFATC4; complex formation is enhanced by calcineurin. Interacts with TRIM17; this interaction prevents NFATC3 nuclear localization. Interacts with and ubiquitinated by STUB1/CHIP; HSPA1A/HSP70 is required as a co-chaperone. In terms of processing, phosphorylated by NFATC-kinase; dephosphorylated by calcineurin. Post-translationally, ubiquitinated by STUB1/CHIP, leading to proteasomal degradation. Expressed in cardiomyocytes (at protein level).

The protein resides in the cytoplasm. It is found in the nucleus. Acts as a regulator of transcriptional activation. Binds to the TNFSF11/RANKL promoter region and promotes TNFSF11 transcription. Binding to the TNFSF11 promoter region is increased by high levels of Ca(2+) which induce NFATC3 expression and may lead to regulation of TNFSF11 expression in osteoblasts. Plays a role in promoting mesenteric arterial wall remodeling in response to the intermittent hypoxia-induced increase in EDN1 and ROCK signaling. As a result NFATC3 colocalizes with F-actin filaments, translocates to the nucleus and promotes transcription of the smooth muscle hypertrophy and differentiation marker ACTA2. Promotes lipopolysaccharide-induced apoptosis and hypertrophy in cardiomyocytes. Following JAK/STAT signaling activation and as part of a complex with NFATC4 and STAT3, binds to the alpha-beta E4 promoter region of CRYAB and activates transcription in cardiomyocytes. In conjunction with NFATC4, involved in embryonic heart development via maintenance of cardiomyocyte survival, proliferation and differentiation. Plays a role in the inducible expression of cytokine genes in T-cells, especially in the induction of the IL-2. Required for thymocyte maturation during DN3 to DN4 transition and during positive selection. Positively regulates macrophage-derived polymicrobial clearance, via binding to the promoter region and promoting transcription of NOS2 resulting in subsequent generation of nitric oxide. Involved in Ca(2+)-mediated transcriptional responses upon Ca(2+) influx via ORAI1 CRAC channels. The polypeptide is Nuclear factor of activated T-cells, cytoplasmic 3 (Rattus norvegicus (Rat)).